Consider the following 430-residue polypeptide: Asparagine--tRNA ligase (430 aa).

The protein belongs to the class-II aminoacyl-tRNA synthetase family. Homodimer.

It localises to the cytoplasm. The enzyme catalyses tRNA(Asn) + L-asparagine + ATP = L-asparaginyl-tRNA(Asn) + AMP + diphosphate + H(+). This Staphylococcus aureus (strain JH1) protein is Asparagine--tRNA ligase.